The chain runs to 246 residues: CTD nuclear envelope phosphatase 1 homolog (246 aa).

The chain crosses the membrane as a helical span at residues 3-23 (TIAQSVFCFLAGFFNFFLLYF). One can recognise an FCP1 homology domain in the interval 53–220 (LTVKRKILVL…LNLLPFLDAL (168 aa)).

Belongs to the dullard family.

Its subcellular location is the membrane. It is found in the nucleus envelope. It catalyses the reaction O-phospho-L-seryl-[protein] + H2O = L-seryl-[protein] + phosphate. The enzyme catalyses O-phospho-L-threonyl-[protein] + H2O = L-threonyl-[protein] + phosphate. In terms of biological role, serine/threonine protein phosphatase that may dephosphorylate and activate lipin-like phosphatases. Lipins are phosphatidate phosphatases that catalyze the conversion of phosphatidic acid to diacylglycerol and control the metabolism of fatty acids at different levels. May indirectly modulate the lipid composition of nuclear and/or endoplasmic reticulum membranes and be required for proper nuclear membrane morphology and/or dynamics. Contributes to closure of nuclear envelope (NE) holes and prevents excess nuclear membranes after meiosis and mitosis, possibly through spatial regulation of lipin. May limit the production of endoplasmic reticulum (ER) sheets proximal to the NE to prevent the ER membranes that feed into NE openings from invading the nuclear interior and thereby restrict nuclear transport to nuclear pore complexes (NPCs). May also indirectly regulate the production of lipid droplets and triacylglycerol. The sequence is that of CTD nuclear envelope phosphatase 1 homolog (cnep-1) from Caenorhabditis elegans.